We begin with the raw amino-acid sequence, 101 residues long: Protein Tat (101 aa).

The tract at residues 1–24 is interaction with human CREBBP; the sequence is MEPVDPNREPWNHPGSQPKTACTN. The transactivation stretch occupies residues 1–48; sequence MEPVDPNREPWNHPGSQPKTACTNCYCKKCCYHCQVCFLQKGLGISYG. 3 residues coordinate Zn(2+): Cys22, Cys25, and Cys27. The cysteine-rich stretch occupies residues 22-37; that stretch reads CTNCYCKKCCYHCQVC. Lys28 carries the post-translational modification N6-acetyllysine; by host PCAF. Zn(2+)-binding residues include Cys30, His33, Cys34, and Cys37. The segment at 38–48 is core; it reads FLQKGLGISYG. The interval 48-101 is disordered; it reads GRKKRRQRRSAPPGSKTHQDLIPKQPLSQTQRKPTGPEESKKEVESKAEPDRFD. The Nuclear localization signal, RNA-binding (TAR), and protein transduction signature appears at 49–57; that stretch reads RKKRRQRRS. Residues 49 to 86 form an interaction with the host capping enzyme RNGTT region; it reads RKKRRQRRSAPPGSKTHQDLIPKQPLSQTQRKPTGPEE. N6-acetyllysine; by host EP300 and GCN5L2 is present on residues Lys50 and Lys51. Asymmetric dimethylarginine; by host PRMT6 is present on residues Arg52 and Arg53. Lys71 participates in a covalent cross-link: Glycyl lysine isopeptide (Lys-Gly) (interchain with G-Cter in ubiquitin). Residues 82 to 101 show a composition bias toward basic and acidic residues; sequence TGPEESKKEVESKAEPDRFD.

It belongs to the lentiviruses Tat family. Interacts with host CCNT1. Associates with the P-TEFb complex composed at least of Tat, P-TEFb (CDK9 and CCNT1), TAR RNA, RNA Pol II. Recruits the HATs CREBBP, TAF1/TFIID, EP300, PCAF and GCN5L2. Interacts with host KAT5/Tip60; this interaction targets the latter to degradation. Interacts with the host deacetylase SIRT1. Interacts with host capping enzyme RNGTT; this interaction stimulates RNGTT. Binds to host KDR, and to the host integrins ITGAV/ITGB3 and ITGA5/ITGB1. Interacts with host KPNB1/importin beta-1 without previous binding to KPNA1/importin alpha-1. Interacts with EIF2AK2. Interacts with host nucleosome assembly protein NAP1L1; this interaction may be required for the transport of Tat within the nucleus, since the two proteins interact at the nuclear rim. Interacts with host C1QBP/SF2P32; this interaction involves lysine-acetylated Tat. Interacts with the host chemokine receptors CCR2, CCR3 and CXCR4. Interacts with host DPP4/CD26; this interaction may trigger an anti-proliferative effect. Interacts with host LDLR. Interacts with the host extracellular matrix metalloproteinase MMP1. Interacts with host PRMT6; this interaction mediates Tat's methylation. Interacts with, and is ubiquitinated by MDM2/Hdm2. Interacts with host PSMC3 and HTATIP2. Interacts with STAB1; this interaction may overcome SATB1-mediated repression of IL2 and IL2RA (interleukin) in T cells by binding to the same domain than HDAC1. Interacts (when acetylated) with human CDK13, thereby increasing HIV-1 mRNA splicing and promoting the production of the doubly spliced HIV-1 protein Nef. Interacts with host TBP; this interaction modulates the activity of transcriptional pre-initiation complex. Interacts with host RELA. Interacts with host PLSCR1; this interaction negatively regulates Tat transactivation activity by altering its subcellular distribution. Asymmetrical arginine methylation by host PRMT6 seems to diminish the transactivation capacity of Tat and affects the interaction with host CCNT1. In terms of processing, acetylation by EP300, CREBBP, GCN5L2/GCN5 and PCAF regulates the transactivation activity of Tat. EP300-mediated acetylation of Lys-50 promotes dissociation of Tat from the TAR RNA through the competitive binding to PCAF's bromodomain. In addition, the non-acetylated Tat's N-terminus can also interact with PCAF. PCAF-mediated acetylation of Lys-28 enhances Tat's binding to CCNT1. Lys-50 is deacetylated by SIRT1. Post-translationally, polyubiquitination by host MDM2 does not target Tat to degradation, but activates its transactivation function and fosters interaction with CCNT1 and TAR RNA. Phosphorylated by EIF2AK2 on serine and threonine residues adjacent to the basic region important for TAR RNA binding and function. Phosphorylation of Tat by EIF2AK2 is dependent on the prior activation of EIF2AK2 by dsRNA.

The protein localises to the host nucleus. Its subcellular location is the host nucleolus. It localises to the host cytoplasm. The protein resides in the secreted. Transcriptional activator that increases RNA Pol II processivity, thereby increasing the level of full-length viral transcripts. Recognizes a hairpin structure at the 5'-LTR of the nascent viral mRNAs referred to as the transactivation responsive RNA element (TAR) and recruits the cyclin T1-CDK9 complex (P-TEFb complex) that will in turn hyperphosphorylate the RNA polymerase II to allow efficient elongation. The CDK9 component of P-TEFb and other Tat-activated kinases hyperphosphorylate the C-terminus of RNA Pol II that becomes stabilized and much more processive. Other factors such as HTATSF1/Tat-SF1, SUPT5H/SPT5, and HTATIP2 are also important for Tat's function. Besides its effect on RNA Pol II processivity, Tat induces chromatin remodeling of proviral genes by recruiting the histone acetyltransferases (HATs) CREBBP, EP300 and PCAF to the chromatin. This also contributes to the increase in proviral transcription rate, especially when the provirus integrates in transcriptionally silent region of the host genome. To ensure maximal activation of the LTR, Tat mediates nuclear translocation of NF-kappa-B by interacting with host RELA. Through its interaction with host TBP, Tat may also modulate transcription initiation. Tat can reactivate a latently infected cell by penetrating in it and transactivating its LTR promoter. In the cytoplasm, Tat is thought to act as a translational activator of HIV-1 mRNAs. In terms of biological role, extracellular circulating Tat can be endocytosed by surrounding uninfected cells via the binding to several surface receptors such as CD26, CXCR4, heparan sulfate proteoglycans (HSPG) or LDLR. Neurons are rarely infected, but they internalize Tat via their LDLR. Through its interaction with nuclear HATs, Tat is potentially able to control the acetylation-dependent cellular gene expression. Modulates the expression of many cellular genes involved in cell survival, proliferation or in coding for cytokines or cytokine receptors. Tat plays a role in T-cell and neurons apoptosis. Tat induced neurotoxicity and apoptosis probably contribute to neuroAIDS. Circulating Tat also acts as a chemokine-like and/or growth factor-like molecule that binds to specific receptors on the surface of the cells, affecting many cellular pathways. In the vascular system, Tat binds to ITGAV/ITGB3 and ITGA5/ITGB1 integrins dimers at the surface of endothelial cells and competes with bFGF for heparin-binding sites, leading to an excess of soluble bFGF. The polypeptide is Protein Tat (Homo sapiens (Human)).